The following is a 417-amino-acid chain: mRNA cap guanine-N(7) methyltransferase (417 aa).

Residues 129-412 form the mRNA cap 0 methyltransferase domain; the sequence is SPIIKLRNFN…LYTVFAFKKV (284 aa). 138–139 serves as a coordination point for mRNA; that stretch reads NN. Residues Lys-142, Gly-160, Asp-182, Asp-211, Gln-237, and Tyr-242 each contribute to the S-adenosyl-L-methionine site.

It belongs to the class I-like SAM-binding methyltransferase superfamily. mRNA cap 0 methyltransferase family.

Its subcellular location is the nucleus. The catalysed reaction is a 5'-end (5'-triphosphoguanosine)-ribonucleoside in mRNA + S-adenosyl-L-methionine = a 5'-end (N(7)-methyl 5'-triphosphoguanosine)-ribonucleoside in mRNA + S-adenosyl-L-homocysteine. Functionally, responsible for methylating the 5'-cap structure of mRNAs. In Candida glabrata (strain ATCC 2001 / BCRC 20586 / JCM 3761 / NBRC 0622 / NRRL Y-65 / CBS 138) (Yeast), this protein is mRNA cap guanine-N(7) methyltransferase (ABD1).